The following is a 211-amino-acid chain: Protein-L-isoaspartate O-methyltransferase (211 aa).

Serine 62 is a catalytic residue.

This sequence belongs to the methyltransferase superfamily. L-isoaspartyl/D-aspartyl protein methyltransferase family.

Its subcellular location is the cytoplasm. The enzyme catalyses [protein]-L-isoaspartate + S-adenosyl-L-methionine = [protein]-L-isoaspartate alpha-methyl ester + S-adenosyl-L-homocysteine. Catalyzes the methyl esterification of L-isoaspartyl residues in peptides and proteins that result from spontaneous decomposition of normal L-aspartyl and L-asparaginyl residues. It plays a role in the repair and/or degradation of damaged proteins. This Shewanella frigidimarina (strain NCIMB 400) protein is Protein-L-isoaspartate O-methyltransferase.